Consider the following 78-residue polypeptide: Small ribosomal subunit protein bS20 (78 aa).

Residues 1–34 (MANIKSNLKRNKQNRARHTVVHSQTSAVKTQIKK) form a disordered region. Residues 7-20 (NLKRNKQNRARHTV) are compositionally biased toward basic residues. The span at 21–34 (VHSQTSAVKTQIKK) shows a compositional bias: polar residues.

The protein belongs to the bacterial ribosomal protein bS20 family.

Functionally, binds directly to 16S ribosomal RNA. The sequence is that of Small ribosomal subunit protein bS20 from Malacoplasma penetrans (strain HF-2) (Mycoplasma penetrans).